Consider the following 144-residue polypeptide: 3-dehydroquinate dehydratase (144 aa).

Y22 functions as the Proton acceptor in the catalytic mechanism. The substrate site is built by N73, H79, and D86. H99 functions as the Proton donor in the catalytic mechanism. Substrate-binding positions include 100–101 (LS) and R110.

Belongs to the type-II 3-dehydroquinase family. Homododecamer.

It catalyses the reaction 3-dehydroquinate = 3-dehydroshikimate + H2O. It participates in metabolic intermediate biosynthesis; chorismate biosynthesis; chorismate from D-erythrose 4-phosphate and phosphoenolpyruvate: step 3/7. In terms of biological role, catalyzes a trans-dehydration via an enolate intermediate. This is 3-dehydroquinate dehydratase from Herpetosiphon aurantiacus (strain ATCC 23779 / DSM 785 / 114-95).